The following is a 960-amino-acid chain: Gamma-aminobutyric acid type B receptor subunit 1 (960 aa).

A signal peptide spans 1-19 (MLLLLLVPLFLRPLGAGGA). The Extracellular portion of the chain corresponds to 20 to 590 (QTPNVTSEGC…KTFRFLSQKL (571 aa)). N-linked (GlcNAc...) asparagine glycans are attached at residues N23 and N83. Sushi domains lie at 29 to 95 (CQII…PSRC) and 97 to 158 (RICS…HCQV). 3 disulfides stabilise this stretch: C99/C144, C130/C156, and C219/C245. 4 residues coordinate 4-aminobutanoate: S246, S269, H286, and Y366. C375 and C409 form a disulfide bridge. N-linked (GlcNAc...) asparagine glycans are attached at residues N408 and N439. E465 provides a ligand contact to 4-aminobutanoate. 3 N-linked (GlcNAc...) asparagine glycosylation sites follow: N481, N501, and N513. Residues 591–611 (FISVSVLSSLGIVLAVVCLSF) form a helical membrane-spanning segment. Over 612–630 (NIYNSHVRYIQNSQPNLNN) the chain is Cytoplasmic. Residues 631-651 (LTAVGCSLALAAVFPLGLDGY) traverse the membrane as a helical segment. The Extracellular portion of the chain corresponds to 652–666 (HIGRSQFPFVCQARL). A helical transmembrane segment spans residues 667-687 (WLLGLGFSLGYGSMFTKIWWV). The Cytoplasmic segment spans residues 688-709 (HTVFTKKEEKKEWRKTLEPWKL). The chain crosses the membrane as a helical span at residues 710–730 (YATVGLLVGMDILTLAIWQIV). Topologically, residues 731 to 767 (DPLHRTIETFAKEEPKEDIDVSILPQLEHCSSKKMNT) are extracellular. The chain crosses the membrane as a helical span at residues 768-788 (WLGIFYGYKGLLLLLGIFLAY). Residues 789 to 803 (ETKSVSTEKINDHRA) are Cytoplasmic-facing. Residues 804–824 (VGMAIYNVAVLCLITAPVTMI) form a helical membrane-spanning segment. Topologically, residues 825 to 832 (LSSQQDAA) are extracellular. A helical membrane pass occupies residues 833–853 (FAFASLAIVFSSYITLVVLFV). Residues 854–960 (PKMRRLITRG…DGSRVHLLYK (107 aa)) are Cytoplasmic-facing. 2 disordered regions span residues 866–891 (QSEAQDTMKTGSSTNNNEEEKSRLLE) and 908–960 (VSEL…LLYK). Polar residues predominate over residues 867-879 (SEAQDTMKTGSST). Positions 868 to 924 (EAQDTMKTGSSTNNNEEEKSRLLEKENRELEKIIAEKEERVSELRHQLQSRQQIRSR) form a coiled coil. The residue at position 872 (T872) is a Phosphothreonine. The interaction with ATF4 stretch occupies residues 887-915 (SRLLEKENRELEKIIAEKEERVSELRHQL). T929 bears the Phosphothreonine mark.

The protein belongs to the G-protein coupled receptor 3 family. GABA-B receptor subfamily. As to quaternary structure, heterodimer of GABBR1 and GABBR2. Homodimers may form, but are inactive. Interacts (via C-terminus) with ATF4 (via leucine zipper domain). Interacts with JAKMIP1. Interacts with KCTD8, KCTD12, KCTD12B and KCTD16; this interaction determines the pharmacology and kinetics of the receptor response, the KCTD proteins markedly accelerating the GABA-B response, although to different extents. Expressed in neuronal tissue including cortex, cerebellum and spinal cord. Not detected in non-neuronal tissues including heart, liver, spleen and kidney.

It localises to the cell membrane. The protein resides in the postsynaptic cell membrane. It is found in the cell projection. Its subcellular location is the dendrite. Its function is as follows. Component of a heterodimeric G-protein coupled receptor for GABA, formed by GABBR1 and GABBR2. Within the heterodimeric GABA receptor, only GABBR1 seems to bind agonists, while GABBR2 mediates coupling to G proteins. Ligand binding causes a conformation change that triggers signaling via guanine nucleotide-binding proteins (G proteins) and modulates the activity of down-stream effectors, such as adenylate cyclase. Signaling inhibits adenylate cyclase, stimulates phospholipase A2, activates potassium channels, inactivates voltage-dependent calcium-channels and modulates inositol phospholipid hydrolysis. Calcium is required for high affinity binding to GABA. Plays a critical role in the fine-tuning of inhibitory synaptic transmission. Pre-synaptic GABA receptor inhibits neurotransmitter release by down-regulating high-voltage activated calcium channels, whereas postsynaptic GABA receptor decreases neuronal excitability by activating a prominent inwardly rectifying potassium (Kir) conductance that underlies the late inhibitory postsynaptic potentials. Not only implicated in synaptic inhibition but also in hippocampal long-term potentiation, slow wave sleep, muscle relaxation and antinociception. The sequence is that of Gamma-aminobutyric acid type B receptor subunit 1 (Gabbr1) from Mus musculus (Mouse).